The primary structure comprises 451 residues: Speckle-type POZ protein homolog (451 aa).

A disordered region spans residues 51–75 (EVVSSGSGNSAHGRSISPSPSSASH). Over residues 60 to 75 (SAHGRSISPSPSSASH) the composition is skewed to low complexity. In terms of domain architecture, MATH spans 95–225 (KFNYMWTINN…GDRLSIFCEV (131 aa)). The BTB domain maps to 265 to 338 (SDFTLVCKSD…MYTGQTKYIE (74 aa)).

This sequence belongs to the Tdpoz family.

It is found in the nucleus. Its subcellular location is the nucleus speckle. The protein operates within protein modification; protein ubiquitination. Mediates ubiquitination and proteasomal degradation of target proteins, most likely in complex with cul-3. May promote the degradation of bromodomain-containing proteins such as bet-1. The protein is Speckle-type POZ protein homolog of Caenorhabditis elegans.